The chain runs to 172 residues: Myosin regulatory light polypeptide 9 (172 aa).

Positions 1–16 are enriched in basic residues; the sequence is MSSKRAKTKTTKKRPQ. Residues 1–20 are disordered; the sequence is MSSKRAKTKTTKKRPQRATS. The residue at position 2 (serine 2) is an N-acetylserine. Threonine 19 carries the post-translational modification Phosphothreonine; by MLCK, CIT and ROCK2. Position 20 is a phosphoserine; by CDC42BP, CIT, MLCK, PAK1, ROCK1, ROCK2, DAPK1, DAPK2 and ZIPK/DAPK3 (serine 20). 3 consecutive EF-hand domains span residues 29–64, 98–133, and 134–169; these read SQIQ…LGKN, DPED…MGDR, and FTDE…GAKD. Residues aspartate 42, asparagine 44, aspartate 46, and aspartate 53 each coordinate Ca(2+).

Myosin is a hexamer of 2 heavy chains and 4 light chains: interacts with myosin heavy chain MYO19. Interacts with LUZP1; the interaction results in inhibition of phosphorylation of MYL9 by DAPK3. Post-translationally, phosphorylation increases the actin-activated myosin ATPase activity and thereby regulates the contractile activity. It is required to generate the driving force in the migration of the cells but not necessary for localization of myosin-2 at the leading edge. Phosphorylation is required for myotube formation. Phosphorylated by DAPK3; DAPK3-mediated phosphorylation is inhibited by LUZP1.

The protein resides in the cytoplasm. It is found in the cytoskeleton. Its subcellular location is the cell cortex. Its function is as follows. Myosin regulatory subunit that plays an important role in regulation of both smooth muscle and nonmuscle cell contractile activity via its phosphorylation. Implicated in cytokinesis, receptor capping, and cell locomotion. In myoblasts, may regulate PIEZO1-dependent cortical actomyosin assembly involved in myotube formation. The chain is Myosin regulatory light polypeptide 9 (MYL9) from Bos taurus (Bovine).